The chain runs to 251 residues: Derlin-1 (251 aa).

Residue Ser2 is modified to N-acetylserine. The Cytoplasmic portion of the chain corresponds to 2-15 (SDIGDWFRSIPAIT). The chain crosses the membrane as a helical span at residues 16 to 31 (RYWFAATVAVPLIGKL). Residues 32-69 (GIISPAYFFLWPEAFLYRFQIWRPFTATFYFPVGPGTG) are Lumenal-facing. A helical transmembrane segment spans residues 70–89 (FLYLVNLYFLYQYSTRLEAG). Topologically, residues 90–94 (AFDGR) are cytoplasmic. A helical membrane pass occupies residues 95–115 (PADYLFMLLFNWICIVITGLA). The Lumenal portion of the chain corresponds to 116-122 (MDMQLLM). A helical transmembrane segment spans residues 123 to 137 (IPLIMSVLYVWAQLN). The Cytoplasmic portion of the chain corresponds to 138–154 (RDLIVSFWFGTRFKACY). The chain crosses the membrane as a helical span at residues 155–166 (LPWVILGFNYII). The Lumenal segment spans residues 167 to 170 (GGSV). The helical transmembrane segment at 171-189 (INELIGNLVGHLYFFLMFR) threads the bilayer. Residues 190-251 (YPMDLGGRNF…WGQGFRLGDQ (62 aa)) are Cytoplasmic-facing. The residue at position 201 (Ser201) is a Phosphoserine. The residue at position 202 (Thr202) is a Phosphothreonine. Ser226 is subject to Phosphoserine. Residues 229–251 (RAADQNGGGGRHNWGQGFRLGDQ) are disordered. The SHP-box motif lies at 241–248 (NWGQGFRL).

Belongs to the derlin family. As to quaternary structure, homotetramer. The four subunits of the tetramer are arranged in a twofold symmetry. Forms homo- and heterooligomers with DERL2 and DERL3; binding to DERL3 is poorer than that between DERL2 and DERL3. Interacts (via SHP-box motif) with VCP. Interacts with AMFR, SELENOS, SEL1L, SELENOK and SYVN1, as well as with SEL1L-SYVN1 and VCP-SELENOS protein complexes; this interaction is weaker than that observed between DERL2 and these complexes. Interacts with NGLY1 and YOD1. Does not bind to EDEM1. Interacts with DNAJB9. Interacts with RNF103. Interacts with HM13. Interacts with XBP1 isoform 1 (via luminal/ectodomain domain); the interaction obviates the need for ectodomain shedding prior HM13/SPP-mediated XBP1 isoform 1 cleavage. Interacts with the signal recognition particle/SRP and the SRP receptor; in the process of endoplasmic reticulum stress-induced pre-emptive quality control. May interact with UBXN6. Interacts with ZFAND2B; probably through VCP. Interacts with CCDC47. Interacts with C18orf32. May interact with TRAM1. Forms a complex with SVIP and VCP/p97. Widely expressed, with lowest levels in brain and heart.

Its subcellular location is the endoplasmic reticulum membrane. Functional component of endoplasmic reticulum-associated degradation (ERAD) for misfolded lumenal proteins. Forms homotetramers which encircle a large channel traversing the endoplasmic reticulum (ER) membrane. This allows the retrotranslocation of misfolded proteins from the ER into the cytosol where they are ubiquitinated and degraded by the proteasome. The channel has a lateral gate within the membrane which provides direct access to membrane proteins with no need to reenter the ER lumen first. May mediate the interaction between VCP and the misfolded protein. Also involved in endoplasmic reticulum stress-induced pre-emptive quality control, a mechanism that selectively attenuates the translocation of newly synthesized proteins into the endoplasmic reticulum and reroutes them to the cytosol for proteasomal degradation. By controlling the steady-state expression of the IGF1R receptor, indirectly regulates the insulin-like growth factor receptor signaling pathway. The chain is Derlin-1 from Mus musculus (Mouse).